The following is a 240-amino-acid chain: Large ribosomal subunit protein uL2 (240 aa).

The span at 1-11 shows a compositional bias: polar residues; it reads MGKRLISQNRG. Disordered stretches follow at residues 1-31 and 206-240; these read MGKRLISQNRGRGTPKYRSPSHKRKGAVKYR and GGGRHQHLGKPSSVSRHTSPGRKVGHIASRRTGRK. Basic residues-rich tracts occupy residues 13–28 and 224–240; these read GTPKYRSPSHKRKGAV and SPGRKVGHIASRRTGRK.

Belongs to the universal ribosomal protein uL2 family. As to quaternary structure, part of the 50S ribosomal subunit. Forms a bridge to the 30S subunit in the 70S ribosome.

Its function is as follows. One of the primary rRNA binding proteins. Required for association of the 30S and 50S subunits to form the 70S ribosome, for tRNA binding and peptide bond formation. It has been suggested to have peptidyltransferase activity; this is somewhat controversial. Makes several contacts with the 16S rRNA in the 70S ribosome. The polypeptide is Large ribosomal subunit protein uL2 (Methanococcus maripaludis (strain C6 / ATCC BAA-1332)).